We begin with the raw amino-acid sequence, 437 residues long: Adenylosuccinate synthetase (437 aa).

GTP is bound by residues 25–31 (GDEGKGK), 53–55 (GHT), and K62. The active-site Proton acceptor is D26. Mg(2+)-binding residues include D26 and G53. IMP-binding positions include 26–29 (DEGK) and 51–54 (NAGH). The active-site Proton donor is the H54. Residues T141, R155, N232, and T247 each contribute to the IMP site. Residue T307 participates in GTP binding. 307–313 (TTTKRPR) is a binding site for substrate. R311 provides a ligand contact to IMP. GTP-binding positions include R313, 339–341 (KLD), and 425–427 (GVG).

It belongs to the adenylosuccinate synthetase family. As to quaternary structure, homodimer. It depends on Mg(2+) as a cofactor.

It localises to the cytoplasm. The enzyme catalyses IMP + L-aspartate + GTP = N(6)-(1,2-dicarboxyethyl)-AMP + GDP + phosphate + 2 H(+). It participates in purine metabolism; AMP biosynthesis via de novo pathway; AMP from IMP: step 1/2. Functionally, plays an important role in the salvage pathway for purine nucleotide biosynthesis. Catalyzes the first committed step in the biosynthesis of AMP from IMP. The protein is Adenylosuccinate synthetase of Plasmodium knowlesi (strain H).